The primary structure comprises 146 residues: Large ribosomal subunit protein uL15 (146 aa).

A compositionally biased stretch (basic and acidic residues) spans M1–R13. The tract at residues M1 to R47 is disordered. The segment covering R21 to A31 has biased composition (gly residues).

This sequence belongs to the universal ribosomal protein uL15 family. As to quaternary structure, part of the 50S ribosomal subunit.

Functionally, binds to the 23S rRNA. The polypeptide is Large ribosomal subunit protein uL15 (Clostridium kluyveri (strain NBRC 12016)).